The chain runs to 1328 residues: 5'-3' exoribonuclease 1 (1328 aa).

Residues 1211-1328 (AGKNRKTNVS…VQPMGKLQIN (118 aa)) are disordered. Polar residues predominate over residues 1217-1231 (TNVSANNVSQGTDSR). Residues 1275 to 1286 (HKSKSKFSKGNH) show a composition bias toward basic residues.

Belongs to the 5'-3' exonuclease family. Monomer. It depends on Mg(2+) as a cofactor.

It is found in the cytoplasm. Its subcellular location is the perinuclear region. The protein resides in the P-body. With respect to regulation, strand exchange activity is enhanced by fatty acid synthase (stimulatory factor P190/210). Multifunctional protein that exhibits several independent functions at different levels of the cellular processes. 5'-3' exonuclease component of the nonsense-mediated mRNA decay (NMD) which is a highly conserved mRNA degradation pathway, an RNA surveillance system whose role is to identify and rid cells of mRNA with premature termination codons and thus prevents accumulation of potentially harmful truncated proteins. Involved in the degradation of several hypomodified mature tRNA species and participates in the 5'-processing or the degradation of the snoRNA precursors and rRNA processing. The polypeptide is 5'-3' exoribonuclease 1 (exo2) (Schizosaccharomyces pombe (strain 972 / ATCC 24843) (Fission yeast)).